A 707-amino-acid polypeptide reads, in one-letter code: Serine/threonine protein kinase UL97 (707 aa).

The span at 1 to 14 (MSSALRSRARSASL) shows a compositional bias: low complexity. 4 disordered regions span residues 1–32 (MSSA…PSRA), 113–147 (DGEK…DGYH), 176–199 (FTGG…PLRP), and 231–264 (ESQD…EADS). Residues 113–127 (DGEKEDAASDKENQR) show a composition bias toward basic and acidic residues. A compositionally biased stretch (low complexity) spans 178 to 188 (GGSDPSDSVSG). Catalysis depends on Asp-456, which acts as the Proton acceptor.

Belongs to the protein kinase superfamily. Tyr protein kinase family. HCMV ganciclovir subfamily. As to quaternary structure, interacts with UL83. Post-translationally, autophosphorylates on serine and threonine residues.

Its subcellular location is the virion. The enzyme catalyses L-seryl-[protein] + ATP = O-phospho-L-seryl-[protein] + ADP + H(+). It catalyses the reaction L-threonyl-[protein] + ATP = O-phospho-L-threonyl-[protein] + ADP + H(+). Its function is as follows. Serine/threonine protein kinase that plays important roles in several processes including nuclear viral egress, viral replication or regulation of host cell cycle progression. Participates in the acquisition of tegument during virion morphogenesis in the nucleus. Redistributes the host nuclear lamina by phosphorylating cellular Lamins-A/C. Plays a role in viral DNA synthesis by phosphorylating the DNA polymerase processivity factor UL44. Stimulates host cell cycle to support viral DNA synthesis by phosphorylating host retinoblastoma/RB1 protein. Additional substrates have been identified including host EF1D or H2B. Also phosphorylates host SAMHD1 and thereby counteracts its antiviral effect by reducing its dNTP hydrolase activity. This Homo sapiens (Human) protein is Serine/threonine protein kinase UL97 (UL97).